The sequence spans 116 residues: Integration host factor subunit alpha (116 aa).

Disordered stretches follow at residues 58 to 80 and 94 to 116; these read FGNF…GETI and QKLK…EAAE. Polar residues predominate over residues 94 to 105; the sequence is QKLKSTVEQSGN.

It belongs to the bacterial histone-like protein family. Heterodimer of an alpha and a beta chain.

In terms of biological role, this protein is one of the two subunits of integration host factor, a specific DNA-binding protein that functions in genetic recombination as well as in transcriptional and translational control. The chain is Integration host factor subunit alpha from Bordetella avium (strain 197N).